The chain runs to 404 residues: LL-diaminopimelate aminotransferase (404 aa).

Tyrosine 15 and glycine 42 together coordinate substrate. Pyridoxal 5'-phosphate-binding positions include tyrosine 72, 108-109, tyrosine 132, asparagine 188, tyrosine 219, and 247-249; these read AK and SFS. Residues lysine 109, tyrosine 132, and asparagine 188 each contribute to the substrate site. Lysine 250 carries the N6-(pyridoxal phosphate)lysine modification. Pyridoxal 5'-phosphate-binding residues include arginine 258 and asparagine 288. Residues asparagine 288 and arginine 384 each coordinate substrate.

Belongs to the class-I pyridoxal-phosphate-dependent aminotransferase family. LL-diaminopimelate aminotransferase subfamily. As to quaternary structure, homodimer. Pyridoxal 5'-phosphate is required as a cofactor.

The enzyme catalyses (2S,6S)-2,6-diaminopimelate + 2-oxoglutarate = (S)-2,3,4,5-tetrahydrodipicolinate + L-glutamate + H2O + H(+). The protein operates within amino-acid biosynthesis; L-lysine biosynthesis via DAP pathway; LL-2,6-diaminopimelate from (S)-tetrahydrodipicolinate (aminotransferase route): step 1/1. In terms of biological role, involved in the synthesis of meso-diaminopimelate (m-DAP or DL-DAP), required for both lysine and peptidoglycan biosynthesis. Catalyzes the direct conversion of tetrahydrodipicolinate to LL-diaminopimelate. This Agathobacter rectalis (strain ATCC 33656 / DSM 3377 / JCM 17463 / KCTC 5835 / VPI 0990) (Eubacterium rectale) protein is LL-diaminopimelate aminotransferase.